We begin with the raw amino-acid sequence, 717 residues long: Polyribonucleotide nucleotidyltransferase (717 aa).

Mg(2+)-binding residues include aspartate 486 and aspartate 492. Residues 553–612 (PKIVQLQIDIDKISLVIGSTGKTVKAITDEFEVRVQIEQDGRITLFGTDNLKMQKAKAKI) form the KH domain. In terms of domain architecture, S1 motif spans 622–715 (GEIYDGIVKK…KFGKIELELA (94 aa)). The disordered stretch occupies residues 650-681 (SNRSRSRDDRYGSDIRHSRYSNRNSRYGRDNR). Positions 654-666 (RSRDDRYGSDIRH) are enriched in basic and acidic residues.

The protein belongs to the polyribonucleotide nucleotidyltransferase family. Mg(2+) is required as a cofactor.

It is found in the cytoplasm. The enzyme catalyses RNA(n+1) + phosphate = RNA(n) + a ribonucleoside 5'-diphosphate. Functionally, involved in mRNA degradation. Catalyzes the phosphorolysis of single-stranded polyribonucleotides processively in the 3'- to 5'-direction. This chain is Polyribonucleotide nucleotidyltransferase, found in Borrelia duttonii (strain Ly).